A 169-amino-acid chain; its full sequence is Der GTPase-activating protein YihI (169 aa).

2 disordered regions span residues 1–98 (MKPS…PQAE) and 144–169 (GLSYDDDEEEEEDEKQEDMMRLLRGN). Positions 10-19 (SKGHAKARRK) are enriched in basic residues. The segment covering 20 to 30 (TREELDQEARD) has biased composition (basic and acidic residues). The span at 31–40 (RKRQKKRRGH) shows a compositional bias: basic residues. Positions 49 to 58 (GNTTSGSKGQ) are enriched in polar residues. Over residues 147–159 (YDDDEEEEEDEKQ) the composition is skewed to acidic residues. Residues 160-169 (EDMMRLLRGN) are compositionally biased toward basic and acidic residues.

The protein belongs to the YihI family. Interacts with Der.

A GTPase-activating protein (GAP) that modifies Der/EngA GTPase function. May play a role in ribosome biogenesis. The chain is Der GTPase-activating protein YihI from Escherichia coli O139:H28 (strain E24377A / ETEC).